A 414-amino-acid chain; its full sequence is MSYSVNTFTDYVLLFGSSSLVGKGILENLLDINLYIKNVSDLQGKLDSLSEIKGNVVLNKHVFCVNRRCINEEKSFMKTIDYINMRSVTWQGGRYYLRSRKEKDTEKVPSSPNTFCYDNFEEGFIKNTPEERGKDGYSFVYNQKQFSYTLHYACGKEKGIEIICNFTVTQLIIPRSETWPKLLPRIFSGTQKLEKFDIDNKNYVPGRSLPSLCDISTMVCSLGSTSARVRRTQVPSSFADYYLPFNLAQEFTNTTNKRLVVTTAFNNDFLSKTFEYFRIKAKLENDLDEALPNKLKELVILRPGPMCGQHGNPINVELGKENSTFLEKIFYYPHYLLVYKKKYISEARRIGLRTKLSEIIASSIYRMPGSALLGYAVPVSKVSYVASLMAIERKSKEAGPKLEVISSYQIDMIV.

May participate in the control of processing of mutational intermediates appearing during error-prone bypass of DNA damage. The chain is Protein HIM1 (HIM1) from Saccharomyces cerevisiae (strain ATCC 204508 / S288c) (Baker's yeast).